The sequence spans 208 residues: N-(5'-phosphoribosyl)anthranilate isomerase (208 aa).

It belongs to the TrpF family.

The catalysed reaction is N-(5-phospho-beta-D-ribosyl)anthranilate = 1-(2-carboxyphenylamino)-1-deoxy-D-ribulose 5-phosphate. It functions in the pathway amino-acid biosynthesis; L-tryptophan biosynthesis; L-tryptophan from chorismate: step 3/5. In Desulforamulus reducens (strain ATCC BAA-1160 / DSM 100696 / MI-1) (Desulfotomaculum reducens), this protein is N-(5'-phosphoribosyl)anthranilate isomerase.